A 340-amino-acid polypeptide reads, in one-letter code: UDP-3-O-acylglucosamine N-acyltransferase (340 aa).

The active-site Proton acceptor is His238.

It belongs to the transferase hexapeptide repeat family. LpxD subfamily. In terms of assembly, homotrimer.

It catalyses the reaction a UDP-3-O-[(3R)-3-hydroxyacyl]-alpha-D-glucosamine + a (3R)-hydroxyacyl-[ACP] = a UDP-2-N,3-O-bis[(3R)-3-hydroxyacyl]-alpha-D-glucosamine + holo-[ACP] + H(+). It functions in the pathway bacterial outer membrane biogenesis; LPS lipid A biosynthesis. Catalyzes the N-acylation of UDP-3-O-acylglucosamine using 3-hydroxyacyl-ACP as the acyl donor. Is involved in the biosynthesis of lipid A, a phosphorylated glycolipid that anchors the lipopolysaccharide to the outer membrane of the cell. The protein is UDP-3-O-acylglucosamine N-acyltransferase of Shewanella denitrificans (strain OS217 / ATCC BAA-1090 / DSM 15013).